Reading from the N-terminus, the 244-residue chain is 6-carboxyhexanoate--CoA ligase (244 aa).

It belongs to the BioW family. As to quaternary structure, homodimer. Mg(2+) is required as a cofactor.

The enzyme catalyses heptanedioate + ATP + CoA = 6-carboxyhexanoyl-CoA + AMP + diphosphate. It participates in metabolic intermediate metabolism; pimeloyl-CoA biosynthesis; pimeloyl-CoA from pimelate: step 1/1. Its function is as follows. Catalyzes the transformation of pimelate into pimeloyl-CoA with concomitant hydrolysis of ATP to AMP. In Hydrogenobacter thermophilus (strain DSM 6534 / IAM 12695 / TK-6), this protein is 6-carboxyhexanoate--CoA ligase.